Here is a 513-residue protein sequence, read N- to C-terminus: Histidine ammonia-lyase (513 aa).

Positions 143 to 145 form a cross-link, 5-imidazolinone (Ala-Gly); it reads ASG. Ser144 bears the 2,3-didehydroalanine (Ser) mark.

The protein belongs to the PAL/histidase family. In terms of processing, contains an active site 4-methylidene-imidazol-5-one (MIO), which is formed autocatalytically by cyclization and dehydration of residues Ala-Ser-Gly.

Its subcellular location is the cytoplasm. It catalyses the reaction L-histidine = trans-urocanate + NH4(+). Its pathway is amino-acid degradation; L-histidine degradation into L-glutamate; N-formimidoyl-L-glutamate from L-histidine: step 1/3. This is Histidine ammonia-lyase from Paracoccus denitrificans (strain Pd 1222).